Reading from the N-terminus, the 312-residue chain is Methionyl-tRNA formyltransferase (312 aa).

Residue 111–114 (SLLP) coordinates (6S)-5,6,7,8-tetrahydrofolate.

The protein belongs to the Fmt family.

It catalyses the reaction L-methionyl-tRNA(fMet) + (6R)-10-formyltetrahydrofolate = N-formyl-L-methionyl-tRNA(fMet) + (6S)-5,6,7,8-tetrahydrofolate + H(+). Functionally, attaches a formyl group to the free amino group of methionyl-tRNA(fMet). The formyl group appears to play a dual role in the initiator identity of N-formylmethionyl-tRNA by promoting its recognition by IF2 and preventing the misappropriation of this tRNA by the elongation apparatus. This is Methionyl-tRNA formyltransferase from Rhodopseudomonas palustris (strain HaA2).